The chain runs to 453 residues: Allantoinase (453 aa).

Positions 59, 61, 146, 186, 242, and 315 each coordinate Zn(2+). N6-carboxylysine is present on Lys-146.

Belongs to the metallo-dependent hydrolases superfamily. Allantoinase family. In terms of assembly, homotetramer. Requires Zn(2+) as cofactor. In terms of processing, carboxylation allows a single lysine to coordinate two zinc ions.

The enzyme catalyses (S)-allantoin + H2O = allantoate + H(+). It participates in nitrogen metabolism; (S)-allantoin degradation; allantoate from (S)-allantoin: step 1/1. Functionally, catalyzes the conversion of allantoin (5-ureidohydantoin) to allantoic acid by hydrolytic cleavage of the five-member hydantoin ring. This chain is Allantoinase, found in Escherichia coli O139:H28 (strain E24377A / ETEC).